A 491-amino-acid polypeptide reads, in one-letter code: Serine/threonine-protein kinase 3/4 (491 aa).

The tract at residues 1–24 (MEEVQRRQHPHPRRSLKKLSEDSL) is disordered. Basic residues predominate over residues 7-17 (RQHPHPRRSLK). The Protein kinase domain occupies 32–283 (FDVLEKLGEG…ATQLLQHPFI (252 aa)). Residues 38-46 (LGEGSYGSV) and Lys61 each bind ATP. Asp151 (proton acceptor) is an active-site residue. Thr185 is modified (phosphothreonine; by autocatalysis). A coiled-coil region spans residues 292 to 334 (LRDLITDMMEIKLKRQEEQQRDLDQDDEENSEEDDMDSGTMVR). Disordered stretches follow at residues 307-394 (QEEQ…IQQS) and 406-435 (EKENQANSHSNRNAQALQNSSDNWKVPQDG). Acidic residues predominate over residues 315–328 (DQDDEENSEEDDMD). 2 stretches are compositionally biased toward polar residues: residues 363–373 (TLDSQMGTMVI) and 410–428 (QANSHSNRNAQALQNSSDN). Residues 437–484 (FESLKSWSVEELQRRLASLDPTMEQEIEEIRQRYQAKRQPILDAIDAK) enclose the SARAH domain. A coiled-coil region spans residues 442–475 (SWSVEELQRRLASLDPTMEQEIEEIRQRYQAKRQ).

This sequence belongs to the protein kinase superfamily. STE Ser/Thr protein kinase family. STE20 subfamily. Homodimer; mediated via the coiled-coil region. The cofactor is Mg(2+). Post-translationally, proteolytically cleaved by caspase-3 during apoptosis at Asp-328 resulting in a 37 kDa form. Proteolytic cleavage results in kinase activation and nuclear translocation of the truncated form (MST1/N).

It is found in the cytoplasm. The protein localises to the nucleus. The enzyme catalyses L-seryl-[protein] + ATP = O-phospho-L-seryl-[protein] + ADP + H(+). The catalysed reaction is L-threonyl-[protein] + ATP = O-phospho-L-threonyl-[protein] + ADP + H(+). Inhibited by the C-terminal non-catalytic region. Activated by caspase-cleavage. Full activation also requires homodimerization and autophosphorylation of Thr-185. Its function is as follows. Stress-activated, pro-apoptotic kinase which, following caspase-cleavage, enters the nucleus and induces chromatin condensation followed by internucleosomal DNA fragmentation. Key component of the Hippo signaling pathway which plays a pivotal role in organ size control and tumor suppression by restricting proliferation and promoting apoptosis. The core of this pathway is composed of a kinase cascade wherein stk3/mst2 and stk4/mst1, in complex with its regulatory protein sav1, phosphorylates and activates lats1/2 in complex with its regulatory protein mob1, which in turn phosphorylates and inactivates yap1 oncoprotein and wwtr1/taz. Phosphorylation of yap1 by lats2 inhibits its translocation into the nucleus to regulate cellular genes important for cell proliferation, cell death, and cell migration. Phosphorylates 'Ser-14' of histone H2B (H2BS14ph) during apoptosis. The polypeptide is Serine/threonine-protein kinase 3/4 (STK4) (Squalus acanthias (Spiny dogfish)).